The sequence spans 143 residues: Ribosome-binding factor A (143 aa).

The disordered stretch occupies residues 123–143 (DNSLQENYKDSDKETKVEKLR).

This sequence belongs to the RbfA family. As to quaternary structure, monomer. Binds 30S ribosomal subunits, but not 50S ribosomal subunits or 70S ribosomes.

It is found in the cytoplasm. Its function is as follows. One of several proteins that assist in the late maturation steps of the functional core of the 30S ribosomal subunit. Associates with free 30S ribosomal subunits (but not with 30S subunits that are part of 70S ribosomes or polysomes). Required for efficient processing of 16S rRNA. May interact with the 5'-terminal helix region of 16S rRNA. This Francisella philomiragia subsp. philomiragia (strain ATCC 25017 / CCUG 19701 / FSC 153 / O#319-036) protein is Ribosome-binding factor A.